A 404-amino-acid chain; its full sequence is F-box protein At3g57590 (404 aa).

The 47-residue stretch at 1-47 folds into the F-box domain; that stretch reads MEPIPNDLILEIFSRLPAKSVIGFRTLSKHWASILRSPVFTELFLTR.

The polypeptide is F-box protein At3g57590 (Arabidopsis thaliana (Mouse-ear cress)).